The sequence spans 1404 residues: DNA-directed RNA polymerase subunit beta' (1404 aa).

Residues C72, C74, C87, and C90 each contribute to the Zn(2+) site. Mg(2+)-binding residues include D462, D464, and D466. Zn(2+)-binding residues include C816, C890, C897, and C900.

It belongs to the RNA polymerase beta' chain family. The RNAP catalytic core consists of 2 alpha, 1 beta, 1 beta' and 1 omega subunit. When a sigma factor is associated with the core the holoenzyme is formed, which can initiate transcription. Mg(2+) serves as cofactor. It depends on Zn(2+) as a cofactor.

The enzyme catalyses RNA(n) + a ribonucleoside 5'-triphosphate = RNA(n+1) + diphosphate. Its function is as follows. DNA-dependent RNA polymerase catalyzes the transcription of DNA into RNA using the four ribonucleoside triphosphates as substrates. The sequence is that of DNA-directed RNA polymerase subunit beta' from Azoarcus sp. (strain BH72).